The primary structure comprises 245 residues: tRNA pseudouridine synthase A (245 aa).

Aspartate 52 serves as the catalytic Nucleophile. Position 111 (tyrosine 111) interacts with substrate.

This sequence belongs to the tRNA pseudouridine synthase TruA family. Homodimer.

It catalyses the reaction uridine(38/39/40) in tRNA = pseudouridine(38/39/40) in tRNA. In terms of biological role, formation of pseudouridine at positions 38, 39 and 40 in the anticodon stem and loop of transfer RNAs. The chain is tRNA pseudouridine synthase A from Thermotoga petrophila (strain ATCC BAA-488 / DSM 13995 / JCM 10881 / RKU-1).